Here is a 493-residue protein sequence, read N- to C-terminus: 3-octaprenyl-4-hydroxybenzoate carboxy-lyase (493 aa).

Asn-172 contributes to the Mn(2+) binding site. Residues 175–177 (IYR), 189–191 (RWL), and 194–195 (RG) each bind prenylated FMN. Glu-238 lines the Mn(2+) pocket. Catalysis depends on Asp-287, which acts as the Proton donor.

This sequence belongs to the UbiD family. Homohexamer. It depends on prenylated FMN as a cofactor. The cofactor is Mn(2+).

The protein localises to the cell membrane. The catalysed reaction is a 4-hydroxy-3-(all-trans-polyprenyl)benzoate + H(+) = a 2-(all-trans-polyprenyl)phenol + CO2. Its pathway is cofactor biosynthesis; ubiquinone biosynthesis. In terms of biological role, catalyzes the decarboxylation of 3-octaprenyl-4-hydroxy benzoate to 2-octaprenylphenol, an intermediate step in ubiquinone biosynthesis. The sequence is that of 3-octaprenyl-4-hydroxybenzoate carboxy-lyase from Shewanella sediminis (strain HAW-EB3).